A 601-amino-acid polypeptide reads, in one-letter code: Sulfite reductase [NADPH] flavoprotein alpha-component (601 aa).

Positions 64-202 constitute a Flavodoxin-like domain; the sequence is ITLISASQTG…AAQEWRARVV (139 aa). Residues 70 to 75, 117 to 120, and 153 to 162 each bind FMN; these read SQTGNA, STQG, and LGDTSYEFFC. The FAD-binding FR-type domain occupies 236-450; sequence EAPLSASLAV…IEHNDNFRLP (215 aa). FAD-binding positions include T324, A358, 388–391, 406–408, Y412, and 421–424; these read RLYS, TVG, and GGAS. NADP(+)-binding positions include 521–522, 527–531, and D563; these read SR and KIYVQ. FAD is bound at residue Y601.

Belongs to the NADPH-dependent sulphite reductase flavoprotein subunit CysJ family. It in the N-terminal section; belongs to the flavodoxin family. The protein in the C-terminal section; belongs to the flavoprotein pyridine nucleotide cytochrome reductase family. Alpha(8)-beta(8). The alpha component is a flavoprotein, the beta component is a hemoprotein. FAD serves as cofactor. The cofactor is FMN.

The catalysed reaction is hydrogen sulfide + 3 NADP(+) + 3 H2O = sulfite + 3 NADPH + 4 H(+). The protein operates within sulfur metabolism; hydrogen sulfide biosynthesis; hydrogen sulfide from sulfite (NADPH route): step 1/1. Component of the sulfite reductase complex that catalyzes the 6-electron reduction of sulfite to sulfide. This is one of several activities required for the biosynthesis of L-cysteine from sulfate. The flavoprotein component catalyzes the electron flow from NADPH -&gt; FAD -&gt; FMN to the hemoprotein component. This chain is Sulfite reductase [NADPH] flavoprotein alpha-component, found in Citrobacter koseri (strain ATCC BAA-895 / CDC 4225-83 / SGSC4696).